The chain runs to 3084 residues: Protein prune homolog 2 (3084 aa).

M1 bears the N-acetylmethionine mark. A DHH motif motif is present at residues 109–111 (GSH). Disordered regions lie at residues 394 to 417 (QPSS…QADG), 430 to 465 (TIRS…PGFD), 500 to 536 (ASEQ…PKGL), 672 to 733 (EQES…QKEE), 811 to 837 (KNTW…MGQS), 861 to 907 (EIWG…KATG), 947 to 1080 (SASN…DDPS), 1224 to 1316 (NMPS…GQSE), 1338 to 1395 (SGVN…LEVE), 1502 to 1543 (MNST…DLHD), 1600 to 1652 (GFGK…TTKR), 1776 to 1799 (ETGT…DPDK), 1836 to 1886 (GELE…GDKS), 1961 to 1980 (DENG…QENQ), 2071 to 2196 (ILTH…NPEV), 2410 to 2782 (MLLS…SHPR), 2797 to 2816 (QSEG…EIDI), and 2825 to 2859 (DEAD…AEEE). A compositionally biased stretch (polar residues) spans 501 to 511 (SEQSQPSSHSA). Composition is skewed to basic and acidic residues over residues 682-696 (PWKD…RRTS) and 723-733 (GNKEAQDQKEE). 2 stretches are compositionally biased toward polar residues: residues 811–828 (KNTW…SGQE) and 865–891 (KNNS…NNSK). Low complexity predominate over residues 962-975 (TNYSTSDSYTSPTY). A compositionally biased stretch (basic and acidic residues) spans 977–999 (GDEKEIANKPVDKDNGFEAKDAE). Residues 1009–1019 (ATSSQQSQRNR) show a composition bias toward polar residues. Basic and acidic residues predominate over residues 1034 to 1063 (HTEDKPEGNDAHHPDSDALKTEHAEDKNAS). The segment covering 1071-1080 (SSPSSYDDPS) has biased composition (low complexity). Over residues 1248-1261 (SPRHSNGKDSHMLE) the composition is skewed to basic and acidic residues. The segment covering 1265 to 1294 (LSESGGLTSQPVNQDTWGDSQGDTASSVTG) has biased composition (polar residues). Residues 1350–1366 (KPRDQEFSSSDAFEHQD) show a composition bias toward basic and acidic residues. The span at 1368–1378 (SSASGKISSLS) shows a compositional bias: low complexity. Composition is skewed to polar residues over residues 1779 to 1792 (TMDT…STEA), 1854 to 1869 (PIQN…STNP), and 1965 to 1980 (CVST…QENQ). The segment covering 2089-2103 (VCHDSEGEQKMEKHT) has biased composition (basic and acidic residues). Over residues 2162 to 2174 (SSKPASSRSSPEP) the composition is skewed to low complexity. Composition is skewed to basic and acidic residues over residues 2416–2428 (PDHR…ETNI), 2506–2525 (KQTE…EDHQ), and 2535–2553 (SHEK…RENI). Positions 2569 to 2584 (PETQLSGTPDTCQSEF) are enriched in polar residues. Over residues 2595 to 2606 (RMSSSSNHESAS) the composition is skewed to low complexity. The segment covering 2607-2617 (LENPAQDQSWM) has biased composition (polar residues). Positions 2653 to 2664 (KGPKSQVLERNK) are enriched in basic and acidic residues. Acidic residues predominate over residues 2806-2816 (DNLDSPDEIDI). Residues 2840–2849 (ANKSSGQESE) are compositionally biased toward polar residues. Positions 2879–3040 (DMKVIEPYRR…SIIKYDEEKS (162 aa)) constitute a CRAL-TRIO domain.

Belongs to the PPase class C family. Prune subfamily.

Its subcellular location is the cytoplasm. Its function is as follows. May play an important role in regulating differentiation, survival and aggressiveness of the tumor cells. In Mus musculus (Mouse), this protein is Protein prune homolog 2 (Prune2).